We begin with the raw amino-acid sequence, 698 residues long: Probable metal-nicotianamine transporter YSL17 (698 aa).

The disordered stretch occupies residues 1–36; sequence MAEEARGGQRVVVDDDREDASSVASSTERAFEGEPL. 14 helical membrane-spanning segments follow: residues 43 to 63, 67 to 87, 114 to 134, 157 to 177, 216 to 236, 277 to 297, 322 to 342, 395 to 415, 424 to 444, 463 to 483, 511 to 531, 567 to 587, 607 to 627, and 644 to 664; these read VTAR…VVAM, LTSG…FFLA, IAVV…YILG, IGRV…IIVP, VVTL…QWFF, MITA…WPYI, VFVG…SALV, WVAV…VPLL, VAAA…GVGV, SWVG…GIIV, VGQV…FWVF, LPDH…ALSA, IGVA…AVGC, and LLLP…SLAS.

This sequence belongs to the YSL (TC 2.A.67.2) family. Expressed at low levels in roots.

The protein localises to the membrane. May be involved in the transport of nicotianamine-chelated metals. This chain is Probable metal-nicotianamine transporter YSL17 (YSL17), found in Oryza sativa subsp. japonica (Rice).